The following is a 333-amino-acid chain: MANRVVLDFEKPLFELEAKLEEMRVYLRNSSRDQDSSDQDVLNREIEALEVKVETLRRSIYKNLTRWQKVQLARHAERPFTLDYIYMMTRDFVEMAGDRYFSDDKAIVGGFAILEDIPSGFSQPVMIIGHQKGRDTKSNLYRNFGMAQPEGYRKALRLMKLAEKFNKPVITLIDTPGAFPGIEAEERGQAEAIARNLFEMARLTVPVICVIVGEGASGGAIGLGVGNRILMAENSWYSVISPESCSSILWRSWNYKEQAAEALQPTAEDLLAQGIIDRIIPEPMGGAHTDPEAMAGTLKEMLIEELRILMSKESDVLVRERVEKFSGMGVWDE.

In terms of domain architecture, CoA carboxyltransferase C-terminal spans 48 to 308; it reads ALEVKVETLR…KEMLIEELRI (261 aa).

The protein belongs to the AccA family. In terms of assembly, acetyl-CoA carboxylase is a heterohexamer composed of biotin carboxyl carrier protein (AccB), biotin carboxylase (AccC) and two subunits each of ACCase subunit alpha (AccA) and ACCase subunit beta (AccD).

The protein resides in the cytoplasm. It catalyses the reaction N(6)-carboxybiotinyl-L-lysyl-[protein] + acetyl-CoA = N(6)-biotinyl-L-lysyl-[protein] + malonyl-CoA. It participates in lipid metabolism; malonyl-CoA biosynthesis; malonyl-CoA from acetyl-CoA: step 1/1. Its function is as follows. Component of the acetyl coenzyme A carboxylase (ACC) complex. First, biotin carboxylase catalyzes the carboxylation of biotin on its carrier protein (BCCP) and then the CO(2) group is transferred by the carboxyltransferase to acetyl-CoA to form malonyl-CoA. The protein is Acetyl-coenzyme A carboxylase carboxyl transferase subunit alpha of Chlorobium phaeobacteroides (strain DSM 266 / SMG 266 / 2430).